We begin with the raw amino-acid sequence, 357 residues long: Scopoletin 8-hydroxylase (357 aa).

The region spanning 206 to 307 is the Fe2OG dioxygenase domain; it reads MGTKMVNMNY…RVSVPIFTAP (102 aa). Tyr216 is a binding site for 2-oxoglutarate. Fe cation-binding residues include His231, Asp233, and His288. Residues Arg298 and Ser300 each contribute to the 2-oxoglutarate site.

It belongs to the iron/ascorbate-dependent oxidoreductase family. Requires L-ascorbate as cofactor. The cofactor is Fe(2+). As to expression, expressed in both primary and lateral roots under iron-deficient conditions, except in apical root zones, and mostly in the root epidermal layer.

The enzyme catalyses scopoletin + 2-oxoglutarate + O2 = fraxetin + succinate + CO2. Its pathway is phenylpropanoid metabolism. In terms of biological role, involved in the pathway of sideretin biosynthesis from feruloyl CoA, a redox-active catecholic metabolite exuded by roots in response to iron deficiency in order to facilitate the uptake of iron; this pathway consists in the successive conversion from feruloyl CoA to scopoletin, from scopoletin to fraxetin and from fraxetin to sideretin. Catalyzes the biosynthesis of fraxetin via scopoletin hydroxylation. The sequence is that of Scopoletin 8-hydroxylase from Arabidopsis thaliana (Mouse-ear cress).